Reading from the N-terminus, the 343-residue chain is KRR1 small subunit processome component homolog (343 aa).

Positions 126 to 194 (DIIKIGNLVH…VRDIVLETMN (69 aa)) constitute a KH domain. Residues 230–246 (KNKNISKRKQPKNKKPK) show a composition bias toward basic residues. The disordered stretch occupies residues 230–343 (KNKNISKRKQ…LMKANKKNRS (114 aa)). 2 stretches are compositionally biased toward basic and acidic residues: residues 272–303 (LNKEQKQAKKQQERSVKQAEAAKKQDERRNKD) and 318–331 (RPAETSKVDVDALK). Residues 272-341 (LNKEQKQAKK…AKLMKANKKN (70 aa)) adopt a coiled-coil conformation. Over residues 333-343 (KLMKANKKNRS) the composition is skewed to basic residues.

Belongs to the KRR1 family. Monomer. Component of the ribosomal small subunit (SSU) processome.

The protein localises to the nucleus. It is found in the nucleolus. In terms of biological role, required for 40S ribosome biogenesis. Involved in nucleolar processing of pre-18S ribosomal RNA and ribosome assembly. Binds to RNA. Required for female germline development, cell viability during eye development and for survival of dividing cells and epithelial cells during early wing disk development. The protein is KRR1 small subunit processome component homolog of Drosophila virilis (Fruit fly).